A 242-amino-acid polypeptide reads, in one-letter code: Lysosomal membrane ascorbate-dependent ferrireductase CYB561A3 (242 aa).

Residues 1 to 4 (MASG) lie on the Cytoplasmic side of the membrane. A helical membrane pass occupies residues 5-25 (WFYLSCMVLGSLGSMCILFTA). In terms of domain architecture, Cytochrome b561 spans 12 to 219 (VLGSLGSMCI…FGLLVLYVLL (208 aa)). The Lumenal segment spans residues 26–40 (YWMQYWRGGFAWDGT). The helical transmembrane segment at 41-61 (VLMFNWHPVLMVAGMVVLYGA) threads the bilayer. The heme b site is built by His-47 and Arg-67. The Cytoplasmic portion of the chain corresponds to 62–81 (ASLVYRLPSSWVGPRLPWKV). L-ascorbate is bound by residues Arg-76 and Lys-80. A helical transmembrane segment spans residues 82-102 (LHAALHLLAFTCTVVGLIAVF). Heme b is bound by residues His-83, 112-115 (HLYS), and His-117. Topologically, residues 103–119 (RFHNHSRIAHLYSLHSW) are lumenal. Residues 120–140 (LGITTVVLFACQWFLGFAVFL) traverse the membrane as a helical segment. Over 141 to 154 (LPWASQWLRSLLKP) the chain is Cytoplasmic. Position 149 (Arg-149) interacts with L-ascorbate. A helical membrane pass occupies residues 155–175 (LHVFFGACILSLSITSVISGI). His-156 and Glu-177 together coordinate heme b. Residues 176-202 (NEKLFFVLKNATKPYSSLPGEAVFANS) are Lumenal-facing. The helical transmembrane segment at 203–223 (TGLLVVAFGLLVLYVLLASSW) threads the bilayer. Heme b is bound at residue Lys-224. Residues 224–242 (KRPDPGALTDRQPLLHDRE) are Cytoplasmic-facing.

As to quaternary structure, homodimer. Heme b serves as cofactor. In terms of processing, N-glycosylated. Present in lung, spleen, thymus and testis. Present at low level in brain, heart, liver and kidney. Expressed in the alveolar macrophages of the lung, in the white pulp of the spleen, widespread in the thymus, and in the Sertoli cells of the testis (at protein level).

The protein localises to the late endosome membrane. It localises to the lysosome membrane. It carries out the reaction Fe(3+)(out) + L-ascorbate(in) = monodehydro-L-ascorbate radical(in) + Fe(2+)(out) + H(+). In terms of biological role, transmembrane reductase that uses ascorbate as an electron donor in the cytoplasm and transfers electrons across membranes to reduce iron cations Fe(3+) into Fe(2+) in the lumen of the late endosome and lysosome. Reduced iron can then be extruded from the late endosome and lysosome to the cytoplasm by divalent metal-specific transporters. It is therefore most probably involved in endosomal and lysosomal cellular iron homeostasis. In Mus musculus (Mouse), this protein is Lysosomal membrane ascorbate-dependent ferrireductase CYB561A3.